Here is a 432-residue protein sequence, read N- to C-terminus: Maltoporin (432 aa).

The signal sequence occupies residues 1–22; it reads MKKVSVIAAAVAATLAAGSAFA.

It belongs to the porin LamB (TC 1.B.3) family. Homotrimer formed of three 18-stranded antiparallel beta-barrels, containing three independent channels.

It is found in the cell outer membrane. It catalyses the reaction beta-maltose(in) = beta-maltose(out). Functionally, involved in the transport of maltose and maltodextrins. The polypeptide is Maltoporin (Vibrio parahaemolyticus serotype O3:K6 (strain RIMD 2210633)).